The sequence spans 182 residues: UPF0587 protein YCR090C (182 aa).

Zn(2+)-binding residues include cysteine 36, cysteine 39, cysteine 70, and cysteine 73.

The protein belongs to the UPF0587 family.

This chain is UPF0587 protein YCR090C, found in Saccharomyces cerevisiae (strain ATCC 204508 / S288c) (Baker's yeast).